We begin with the raw amino-acid sequence, 501 residues long: NADH-quinone oxidoreductase subunit N (501 aa).

14 consecutive transmembrane segments (helical) span residues 4-24 (HLPI…RLLV), 34-54 (FVLA…AETL), 80-100 (LAGG…VYAG), 112-132 (GSFY…CATG), 134-154 (LFNL…LIAF), 167-187 (LIIG…LYAM), 207-227 (PVVI…MALF), 241-261 (PAPV…YALY), 278-298 (LQVL…MAIA), 314-334 (VGYI…GALL), 335-355 (HVLS…GVSW), 376-396 (MGAF…LGFF), 409-429 (GAWV…VYFF), and 463-483 (PASM…LGLF).

This sequence belongs to the complex I subunit 2 family. As to quaternary structure, NDH-1 is composed of 14 different subunits. Subunits NuoA, H, J, K, L, M, N constitute the membrane sector of the complex.

It localises to the cell membrane. It carries out the reaction a quinone + NADH + 5 H(+)(in) = a quinol + NAD(+) + 4 H(+)(out). NDH-1 shuttles electrons from NADH, via FMN and iron-sulfur (Fe-S) centers, to quinones in the respiratory chain. The immediate electron acceptor for the enzyme in this species is believed to be a menaquinone. Couples the redox reaction to proton translocation (for every two electrons transferred, four hydrogen ions are translocated across the cytoplasmic membrane), and thus conserves the redox energy in a proton gradient. This Desulforudis audaxviator (strain MP104C) protein is NADH-quinone oxidoreductase subunit N.